A 425-amino-acid chain; its full sequence is Histidine--tRNA ligase (425 aa).

This sequence belongs to the class-II aminoacyl-tRNA synthetase family. As to quaternary structure, homodimer.

It is found in the cytoplasm. The catalysed reaction is tRNA(His) + L-histidine + ATP = L-histidyl-tRNA(His) + AMP + diphosphate + H(+). This Shewanella sp. (strain MR-7) protein is Histidine--tRNA ligase.